We begin with the raw amino-acid sequence, 122 residues long: MSLLDTGARYQTCIVYPEEMVIDSDGNKRTRPSNTGIPAIARFQVANQSGTSARRAEQDNEGFETEKVYRMRFPRSFTKEHGILGAQSQIEWRDQRWALFGDATVYDSSPALARVDYTIKRY.

This is Gene 20 protein (20) from Mycobacterium (Mycobacteriophage L5).